A 302-amino-acid polypeptide reads, in one-letter code: Protein transport protein SEC13 homolog A (302 aa).

6 WD repeats span residues 9–48, 54–95, 101–142, 148–201, 208–251, and 257–296; these read GHSDTIHDVVMDYYGKRVATASSDCTIKITGVSNSGGSQH, GHRG…QWTQ, DHKV…GWDT, AHPV…WKMD, KHTD…EQWE, and DFKTPVWRVSWSLTGNLLAVSDGNNNVTVWKESVDGEWEQ.

It belongs to the WD repeat SEC13 family. Interacts with MAG5, SEC31A and SEC31B.

It localises to the golgi apparatus. The protein resides in the endoplasmic reticulum. Functionally, required for protein transport from the endoplasmic reticulum to the Golgi apparatus. The sequence is that of Protein transport protein SEC13 homolog A from Arabidopsis thaliana (Mouse-ear cress).